The sequence spans 125 residues: Putative zinc finger A20 and AN1 domain-containing stress-associated protein 8 (125 aa).

Residues 2–36 (TGEPSLCIRGCGFFSTSQTKNLCSKCYNDFLKDES) form an A20-type zinc finger. C8, C12, C24, C27, C80, C82, H96, and C98 together coordinate Zn(2+). Residues 61–106 (LGSKGGCACKKKVGLLGFHCRCGHLFFASHRYPEEHSCPSDYKSAA) form an AN1-type; degenerate zinc finger.

In terms of biological role, may be involved in environmental stress response. The chain is Putative zinc finger A20 and AN1 domain-containing stress-associated protein 8 (SAP8) from Arabidopsis thaliana (Mouse-ear cress).